The primary structure comprises 150 residues: Large ribosomal subunit protein uL13 (150 aa).

Belongs to the universal ribosomal protein uL13 family. As to quaternary structure, part of the 50S ribosomal subunit.

Functionally, this protein is one of the early assembly proteins of the 50S ribosomal subunit, although it is not seen to bind rRNA by itself. It is important during the early stages of 50S assembly. The chain is Large ribosomal subunit protein uL13 from Chlamydia muridarum (strain MoPn / Nigg).